The following is a 548-amino-acid chain: T-complex protein 1 subunit alpha (548 aa).

The protein belongs to the TCP-1 chaperonin family. Heterooligomeric complex of about 850 to 900 kDa that forms two stacked rings, 12 to 16 nm in diameter.

It localises to the cytoplasm. In terms of biological role, molecular chaperone; assists the folding of proteins upon ATP hydrolysis. Known to play a role, in vitro, in the folding of actin and tubulin. The polypeptide is T-complex protein 1 subunit alpha (tcp1) (Dictyostelium discoideum (Social amoeba)).